The primary structure comprises 80 residues: uncharacterized protein (80 aa).

Essential for virus function. This is an uncharacterized protein from Sulfolobus spindle-shape virus 1 (SSV1).